The sequence spans 51 residues: Cyclic phosphodiesterase (51 aa).

Catalysis depends on H11, which acts as the Proton donor/acceptor. T13 provides a ligand contact to substrate. Catalysis depends on H38, which acts as the Proton donor/acceptor. The substrate site is built by S40 and Y43.

It belongs to the 2H phosphoesterase superfamily. CPD1 family.

Hydrolyzes ADP-ribose 1'',2''-cyclic phosphate (Appr&gt;1) that is produced during tRNA splicing into ADP-ribose 1''-phosphate (Appr-1''p). In Triticum aestivum (Wheat), this protein is Cyclic phosphodiesterase.